The chain runs to 187 residues: Peptidyl-tRNA hydrolase (187 aa).

A tRNA-binding site is contributed by His14. His19 (proton acceptor) is an active-site residue. Residues Tyr62, Asn64, and Asn110 each coordinate tRNA.

Belongs to the PTH family. In terms of assembly, monomer.

It localises to the cytoplasm. The enzyme catalyses an N-acyl-L-alpha-aminoacyl-tRNA + H2O = an N-acyl-L-amino acid + a tRNA + H(+). Its function is as follows. Hydrolyzes ribosome-free peptidyl-tRNAs (with 1 or more amino acids incorporated), which drop off the ribosome during protein synthesis, or as a result of ribosome stalling. In terms of biological role, catalyzes the release of premature peptidyl moieties from peptidyl-tRNA molecules trapped in stalled 50S ribosomal subunits, and thus maintains levels of free tRNAs and 50S ribosomes. The chain is Peptidyl-tRNA hydrolase from Chlorobaculum tepidum (strain ATCC 49652 / DSM 12025 / NBRC 103806 / TLS) (Chlorobium tepidum).